Reading from the N-terminus, the 292-residue chain is Bifunctional protein FolD 1 (292 aa).

165–167 (GRS) contributes to the NADP(+) binding site.

It belongs to the tetrahydrofolate dehydrogenase/cyclohydrolase family. In terms of assembly, homodimer.

It catalyses the reaction (6R)-5,10-methylene-5,6,7,8-tetrahydrofolate + NADP(+) = (6R)-5,10-methenyltetrahydrofolate + NADPH. It carries out the reaction (6R)-5,10-methenyltetrahydrofolate + H2O = (6R)-10-formyltetrahydrofolate + H(+). It functions in the pathway one-carbon metabolism; tetrahydrofolate interconversion. Its function is as follows. Catalyzes the oxidation of 5,10-methylenetetrahydrofolate to 5,10-methenyltetrahydrofolate and then the hydrolysis of 5,10-methenyltetrahydrofolate to 10-formyltetrahydrofolate. The protein is Bifunctional protein FolD 1 of Myxococcus xanthus (strain DK1622).